The sequence spans 418 residues: L-glutamine:2-deoxy-scyllo-inosose aminotransferase (418 aa).

Lys-192 is modified (N6-(pyridoxal phosphate)lysine).

This sequence belongs to the DegT/DnrJ/EryC1 family. L-glutamine:2-deoxy-scyllo-inosose/scyllo-inosose aminotransferase subfamily. The cofactor is pyridoxal 5'-phosphate.

The catalysed reaction is 2-deoxy-L-scyllo-inosose + L-glutamine = 2-deoxy-scyllo-inosamine + 2-oxoglutaramate. It carries out the reaction 3-amino-2,3-dideoxy-scyllo-inosose + L-glutamine = 2-deoxystreptamine + 2-oxoglutaramate. It participates in metabolic intermediate biosynthesis; 2-deoxystreptamine biosynthesis; 2-deoxystreptamine from D-glucose 6-phosphate: step 2/4. The protein operates within metabolic intermediate biosynthesis; 2-deoxystreptamine biosynthesis; 2-deoxystreptamine from D-glucose 6-phosphate: step 4/4. It functions in the pathway antibiotic biosynthesis; butirosin biosynthesis. Functionally, catalyzes the PLP-dependent transamination of 2-deoxy-scyllo-inosose (2-DOI) to form 2-deoxy-scyllo-inosamine (2-DOIA) using L-glutamine as the amino donor. Also catalyzes the transamination of 3-amino-2,3-dideoxy-scyllo-inosose (keto-2-DOIA) into 2-deoxystreptamine (2-DOS). This chain is L-glutamine:2-deoxy-scyllo-inosose aminotransferase (btrR), found in Niallia circulans (Bacillus circulans).